A 474-amino-acid polypeptide reads, in one-letter code: UDP-glycosyltransferase 71E1 (474 aa).

UDP-alpha-D-glucose is bound by residues serine 275, 341 to 342 (WA), 359 to 367 (HCGWNSTLE), and 381 to 384 (YAEQ).

This sequence belongs to the UDP-glycosyltransferase family.

In terms of biological role, may glycosylate diterpenes or flavonols in leaves. The sequence is that of UDP-glycosyltransferase 71E1 from Stevia rebaudiana (Stevia).